A 36-amino-acid polypeptide reads, in one-letter code: Peroxiredoxin-4 (36 aa).

It belongs to the peroxiredoxin family. AhpC/Prx1 subfamily. As to quaternary structure, homodimer; disulfide-linked, upon oxidation. In terms of tissue distribution, venom gland.

It localises to the secreted. The enzyme catalyses a hydroperoxide + [thioredoxin]-dithiol = an alcohol + [thioredoxin]-disulfide + H2O. Its function is as follows. Venom peroxiredoxin enzyme that may play a role as part of a redox pathway leading to the structural/functional diversification of toxins through a disulfide bond engineering mechanism. This chain is Peroxiredoxin-4, found in Crotalus atrox (Western diamondback rattlesnake).